Reading from the N-terminus, the 150-residue chain is Small heat shock protein IbpB (150 aa).

A sHSP domain is found at 26–137 (SQEPIDFPPY…QPQRIAIGGG (112 aa)).

The protein belongs to the small heat shock protein (HSP20) family. In terms of assembly, homodimer. Forms homomultimers of about 100-150 subunits at optimal growth temperatures. Conformation changes to oligomers at high temperatures or high ionic concentrations. The decrease in size of the multimers is accompanied by an increase in chaperone activity.

The protein localises to the cytoplasm. In terms of biological role, associates with aggregated proteins, together with IbpA, to stabilize and protect them from irreversible denaturation and extensive proteolysis during heat shock and oxidative stress. Aggregated proteins bound to the IbpAB complex are more efficiently refolded and reactivated by the ATP-dependent chaperone systems ClpB and DnaK/DnaJ/GrpE. Its activity is ATP-independent. The polypeptide is Small heat shock protein IbpB (Pectobacterium atrosepticum (strain SCRI 1043 / ATCC BAA-672) (Erwinia carotovora subsp. atroseptica)).